Reading from the N-terminus, the 1781-residue chain is Chitin synthase 7 (1781 aa).

N-linked (GlcNAc...) asparagine glycosylation is found at Asn-133, Asn-534, Asn-629, Asn-644, Asn-655, and Asn-660. The next 2 helical transmembrane spans lie at 741 to 761 (AWVA…LKFV) and 777 to 797 (LVLF…IIGF). N-linked (GlcNAc...) asparagine glycans are attached at residues Asn-889 and Asn-1011. The chain crosses the membrane as a helical span at residues 1048–1068 (LLLAFAIIICIVTAVKFLAAL). Asn-1413 is a glycosylation site (N-linked (GlcNAc...) asparagine). 3 consecutive transmembrane segments (helical) span residues 1444-1464 (LTGT…IYVL), 1471-1491 (IPYI…LIFI), and 1499-1519 (IGWM…LPLY). The N-linked (GlcNAc...) asparagine glycan is linked to Asn-1526. The segment at 1677–1712 (QANLSPAAGGGHSRSGTALGFSSGSRSPMPDAMRSQ) is disordered. The segment covering 1690-1702 (RSGTALGFSSGSR) has biased composition (polar residues). In terms of domain architecture, DEK-C spans 1723 to 1779 (GPTDMAIVESIRSVLCEVDLDTVTKKQVRALVEQRLQTELVGERRTFMDRQIDHELE).

It belongs to the chitin synthase family. Class V subfamily.

The protein resides in the cell membrane. It catalyses the reaction [(1-&gt;4)-N-acetyl-beta-D-glucosaminyl](n) + UDP-N-acetyl-alpha-D-glucosamine = [(1-&gt;4)-N-acetyl-beta-D-glucosaminyl](n+1) + UDP + H(+). Functionally, polymerizes chitin, a structural polymer of the cell wall and septum, by transferring the sugar moiety of UDP-GlcNAc to the non-reducing end of the growing chitin polymer. Shows additive effects in septum formation with CHS1, CHS2, CHS3A, CHS4, CHS5 and CHS6. Indispensable for perithecia formation and regulates conidiation. Plays an important role in the response to cell wall stress. Also required for hyphal growth and pathogenicity. The sequence is that of Chitin synthase 7 from Gibberella zeae (strain ATCC MYA-4620 / CBS 123657 / FGSC 9075 / NRRL 31084 / PH-1) (Wheat head blight fungus).